A 234-amino-acid chain; its full sequence is Purine nucleoside phosphorylase DeoD-type (234 aa).

Residue His-4 coordinates a purine D-ribonucleoside. Phosphate-binding positions include Gly-20, Arg-24, Arg-43, and 87 to 90 (RVGT). Residues 179–181 (EME) and 203–204 (SN) each bind a purine D-ribonucleoside.

The protein belongs to the PNP/UDP phosphorylase family. In terms of assembly, homohexamer; trimer of homodimers.

The catalysed reaction is a purine D-ribonucleoside + phosphate = a purine nucleobase + alpha-D-ribose 1-phosphate. It catalyses the reaction a purine 2'-deoxy-D-ribonucleoside + phosphate = a purine nucleobase + 2-deoxy-alpha-D-ribose 1-phosphate. Functionally, catalyzes the reversible phosphorolytic breakdown of the N-glycosidic bond in the beta-(deoxy)ribonucleoside molecules, with the formation of the corresponding free purine bases and pentose-1-phosphate. The polypeptide is Purine nucleoside phosphorylase DeoD-type (Latilactobacillus sakei subsp. sakei (strain 23K) (Lactobacillus sakei subsp. sakei)).